Here is a 379-residue protein sequence, read N- to C-terminus: Glutamate 5-kinase (379 aa).

Residue Lys-19 coordinates ATP. The substrate site is built by Ser-59, Asp-146, and Asn-158. Residues Thr-178–Asp-179 and Thr-220–Lys-226 contribute to the ATP site. The region spanning Ser-285–Asp-363 is the PUA domain.

Belongs to the glutamate 5-kinase family.

Its subcellular location is the cytoplasm. The enzyme catalyses L-glutamate + ATP = L-glutamyl 5-phosphate + ADP. It functions in the pathway amino-acid biosynthesis; L-proline biosynthesis; L-glutamate 5-semialdehyde from L-glutamate: step 1/2. Functionally, catalyzes the transfer of a phosphate group to glutamate to form L-glutamate 5-phosphate. This is Glutamate 5-kinase from Vibrio vulnificus (strain YJ016).